The primary structure comprises 399 residues: Transferrin receptor subunit ESAG6 (399 aa).

The first 17 residues, 1–17, serve as a signal peptide directing secretion; it reads MRFWFVLLALLGKEIYA. N-linked (GlcNAc...) asparagine glycosylation is found at asparagine 26 and asparagine 110. Intrachain disulfides connect cysteine 34-cysteine 161, cysteine 84-cysteine 312, and cysteine 144-cysteine 215. N-linked (GlcNAc...) asparagine glycans are attached at residues asparagine 235, asparagine 250, and asparagine 360. The GPI-anchor amidated asparagine moiety is linked to residue asparagine 376. A propeptide spans 377 to 399 (removed in mature form); sequence AAAIHLSVSTAALCRSALLLGVL.

As to quaternary structure, heterodimer composed of ESAG6 and ESAG7. Post-translationally, N-glycosylated. Glycosylation is dispensable for heterodimer formation and host transferrin binding.

Its subcellular location is the cell membrane. It localises to the flagellar pocket. In terms of biological role, transferrin receptor subunit involved in receptor-mediated acquisition of iron from the environment by binding host TF/transferrin. In Trypanosoma brucei brucei, this protein is Transferrin receptor subunit ESAG6.